The primary structure comprises 210 residues: C4-dicarboxylate TRAP transporter small permease protein DctQ (210 aa).

A run of 4 helical transmembrane segments spans residues 13 to 33, 77 to 97, 113 to 133, and 160 to 180; these read EGLI…YVVL, ALFA…AGHL, VLGV…CVAS, and IGLI…EILV.

The protein belongs to the TRAP transporter small permease family. As to quaternary structure, the complex comprises the extracytoplasmic solute receptor protein DctP, and the two transmembrane proteins DctQ and DctM.

Its subcellular location is the cell inner membrane. Its function is as follows. Part of the tripartite ATP-independent periplasmic (TRAP) transport system DctPQM involved in C4-dicarboxylates uptake. The polypeptide is C4-dicarboxylate TRAP transporter small permease protein DctQ (Pseudomonas aeruginosa (strain ATCC 15692 / DSM 22644 / CIP 104116 / JCM 14847 / LMG 12228 / 1C / PRS 101 / PAO1)).